We begin with the raw amino-acid sequence, 300 residues long: Ribosomal protein L11 methyltransferase (300 aa).

S-adenosyl-L-methionine-binding residues include Thr152, Gly173, Asp195, and Asn234.

Belongs to the methyltransferase superfamily. PrmA family.

The protein localises to the cytoplasm. The catalysed reaction is L-lysyl-[protein] + 3 S-adenosyl-L-methionine = N(6),N(6),N(6)-trimethyl-L-lysyl-[protein] + 3 S-adenosyl-L-homocysteine + 3 H(+). Methylates ribosomal protein L11. The protein is Ribosomal protein L11 methyltransferase of Burkholderia thailandensis (strain ATCC 700388 / DSM 13276 / CCUG 48851 / CIP 106301 / E264).